Consider the following 372-residue polypeptide: GDSL esterase/lipase At1g54020 (372 aa).

Positions 1 to 26 (MECSSVSVLGILLVFPLLHNLVTISG) are cleaved as a signal peptide. Catalysis depends on Ser40, which acts as the Nucleophile. Asn161 and Asn280 each carry an N-linked (GlcNAc...) asparagine glycan. Active-site residues include Asp314 and His317.

The protein belongs to the 'GDSL' lipolytic enzyme family.

The protein localises to the secreted. This Arabidopsis thaliana (Mouse-ear cress) protein is GDSL esterase/lipase At1g54020.